The sequence spans 396 residues: Probable sugar efflux transporter (396 aa).

A run of 12 helical transmembrane segments spans residues 15-35, 50-70, 81-101, 103-123, 136-156, 170-190, 209-229, 246-266, 275-295, 299-319, 333-353, and 364-384; these read VVTL…PVGL, VGIM…PFML, LICL…SWSF, VLVI…SITA, AQAL…GLPL, FFAI…LLPL, PALM…YTAY, FATA…VIFG, ALVS…LPAA, IHLG…GLGM, VAMA…ALVG, and MIGY…IIIF.

This sequence belongs to the major facilitator superfamily. SotB (TC 2.A.1.2) family.

The protein resides in the cell inner membrane. Its function is as follows. Involved in the efflux of sugars. The physiological role may be the reduction of the intracellular concentration of toxic sugars or sugar metabolites. The chain is Probable sugar efflux transporter from Shigella boydii serotype 18 (strain CDC 3083-94 / BS512).